The following is a 786-amino-acid chain: LPS-assembly protein LptD (786 aa).

Positions 1 to 24 (MKKRIPTLLATMIASALYSHQGLA) are cleaved as a signal peptide. 2 disulfide bridges follow: Cys-31–Cys-726 and Cys-173–Cys-727.

The protein belongs to the LptD family. In terms of assembly, component of the lipopolysaccharide transport and assembly complex. Interacts with LptE and LptA. Contains two intramolecular disulfide bonds.

It is found in the cell outer membrane. Its function is as follows. Together with LptE, is involved in the assembly of lipopolysaccharide (LPS) at the surface of the outer membrane. This is LPS-assembly protein LptD from Salmonella typhimurium (strain LT2 / SGSC1412 / ATCC 700720).